Consider the following 380-residue polypeptide: Flap endonuclease 1 (380 aa).

Residues 1 to 105 (MGIKGLAQVL…GELAKRVARH (105 aa)) form an N-domain region. Mg(2+) is bound at residue aspartate 34. 2 residues coordinate DNA: arginine 47 and arginine 71. Residues aspartate 87, glutamate 159, glutamate 161, aspartate 180, and aspartate 182 each contribute to the Mg(2+) site. An I-domain region spans residues 123–254 (MVDRFAKRTV…ARAVELIRQY (132 aa)). Position 159 (glutamate 159) interacts with DNA. Positions 232 and 234 each coordinate DNA. Aspartate 234 is a binding site for Mg(2+). Positions 337–345 (PQGRLDSFF) are interaction with PCNA. The tract at residues 340-380 (RLDSFFKPVPSSPKKPVDTKSKGSAKRKRDSNKGGESKKKR) is disordered. Positions 342–353 (DSFFKPVPSSPK) are enriched in low complexity. 2 positions are modified to phosphoserine: serine 350 and serine 351. Basic and acidic residues predominate over residues 370-380 (SNKGGESKKKR).

The protein belongs to the XPG/RAD2 endonuclease family. FEN1 subfamily. In terms of assembly, interacts with PCNA. Three molecules of rad2 bind to one PCNA trimer with each molecule binding to one PCNA monomer. PCNA stimulates the nuclease activity without altering cleavage specificity. Requires Mg(2+) as cofactor. Post-translationally, phosphorylated. Phosphorylation upon DNA damage induces relocalization to the nuclear plasma.

The protein resides in the nucleus. Its subcellular location is the nucleolus. It is found in the nucleoplasm. The protein localises to the mitochondrion. Its function is as follows. Structure-specific nuclease with 5'-flap endonuclease and 5'-3' exonuclease activities involved in DNA replication and repair. During DNA replication, cleaves the 5'-overhanging flap structure that is generated by displacement synthesis when DNA polymerase encounters the 5'-end of a downstream Okazaki fragment. It enters the flap from the 5'-end and then tracks to cleave the flap base, leaving a nick for ligation. Also involved in the long patch base excision repair (LP-BER) pathway, by cleaving within the apurinic/apyrimidinic (AP) site-terminated flap. Acts as a genome stabilization factor that prevents flaps from equilibrating into structures that lead to duplications and deletions. Also possesses 5'-3' exonuclease activity on nicked or gapped double-stranded DNA, and exhibits RNase H activity. Also involved in replication and repair of rDNA and in repairing mitochondrial DNA. This Schizosaccharomyces pombe (strain 972 / ATCC 24843) (Fission yeast) protein is Flap endonuclease 1.